The sequence spans 314 residues: MTEQINQLSLSSIPIAPEGFKSGFVGIIGRPNVGKSTLMNQLVGQKIAITSPVSQTTRNRLRGILTTEEAQIIFVDTPGIHKPHHQLGKILVQNAEAAINAVDIILVVVDSSIEAGGGDRYIVELLENTETPVILGLNKSDQQPQNYQPIDESYLVLAQAHNWPVIKFSALTGEGLDNLQKTLINLLEPGPYYYPPDLVTDQPERFIMGELIREQILQQTRQEIPHSVAIVIEKVEETPTLTRVFAAINVERDSQKGIIIGKKGAMLKAIGTAAREQMQKLITGEVYLQLFVKVEPQWRQSSLRLSEFGYQIET.

The Era-type G domain maps to lysine 21–proline 189. The G1 stretch occupies residues glycine 29–serine 36. Glycine 29–serine 36 provides a ligand contact to GTP. The interval glutamine 55–asparagine 59 is G2. The G3 stretch occupies residues aspartate 76–glycine 79. Residues aspartate 76–isoleucine 80 and asparagine 138–aspartate 141 each bind GTP. The tract at residues asparagine 138–aspartate 141 is G4. Residues phenylalanine 168–alanine 170 form a G5 region. In terms of domain architecture, KH type-2 spans isoleucine 212–proline 296.

It belongs to the TRAFAC class TrmE-Era-EngA-EngB-Septin-like GTPase superfamily. Era GTPase family. In terms of assembly, monomer.

The protein resides in the cytoplasm. The protein localises to the cell inner membrane. Its function is as follows. An essential GTPase that binds both GDP and GTP, with rapid nucleotide exchange. Plays a role in 16S rRNA processing and 30S ribosomal subunit biogenesis and possibly also in cell cycle regulation and energy metabolism. The protein is GTPase Era of Rippkaea orientalis (strain PCC 8801 / RF-1) (Cyanothece sp. (strain PCC 8801)).